A 205-amino-acid chain; its full sequence is HTH-type transcriptional regulator PksA (205 aa).

The 61-residue stretch at 8 to 68 (EKRRKQIAEA…FAMKLVQEKV (61 aa)) folds into the HTH tetR-type domain. A DNA-binding region (H-T-H motif) is located at residues 31–50 (SARNIAKEAGLSLGALRHYF).

Transcriptional regulation of the polyketide synthase operon. The sequence is that of HTH-type transcriptional regulator PksA (pksA) from Bacillus subtilis (strain 168).